The sequence spans 1071 residues: DNA-directed RNA polymerase subunit beta (1071 aa).

This sequence belongs to the RNA polymerase beta chain family. As to quaternary structure, in plastids the minimal PEP RNA polymerase catalytic core is composed of four subunits: alpha, beta, beta', and beta''. When a (nuclear-encoded) sigma factor is associated with the core the holoenzyme is formed, which can initiate transcription.

The protein resides in the plastid. The protein localises to the chloroplast. The catalysed reaction is RNA(n) + a ribonucleoside 5'-triphosphate = RNA(n+1) + diphosphate. Functionally, DNA-dependent RNA polymerase catalyzes the transcription of DNA into RNA using the four ribonucleoside triphosphates as substrates. The protein is DNA-directed RNA polymerase subunit beta of Drimys granadensis.